Reading from the N-terminus, the 181-residue chain is Ribulose bisphosphate carboxylase small subunit 2B, chloroplastic (181 aa).

The transit peptide at 1–54 (MASSMFSSTAVVTSPAQATMVAPFTGLKSSASFPVTRKANNDITSITSNGGRVS) directs the protein to the chloroplast.

This sequence belongs to the RuBisCO small chain family. As to quaternary structure, heterohexadecamer of 8 large and 8 small subunits.

The protein resides in the plastid. It localises to the chloroplast. Its function is as follows. RuBisCO catalyzes two reactions: the carboxylation of D-ribulose 1,5-bisphosphate, the primary event in carbon dioxide fixation, as well as the oxidative fragmentation of the pentose substrate. Both reactions occur simultaneously and in competition at the same active site. Although the small subunit is not catalytic it is essential for maximal activity. This is Ribulose bisphosphate carboxylase small subunit 2B, chloroplastic (RBCS-2B) from Arabidopsis thaliana (Mouse-ear cress).